The primary structure comprises 788 residues: Endonuclease MutS2 (788 aa).

332-339 (GPNTGGKT) contributes to the ATP binding site. The region spanning 713-788 (IDLRGLDSEE…GTGVTVVELK (76 aa)) is the Smr domain.

It belongs to the DNA mismatch repair MutS family. MutS2 subfamily. Homodimer. Binds to stalled ribosomes, contacting rRNA.

Its function is as follows. Endonuclease that is involved in the suppression of homologous recombination and thus may have a key role in the control of bacterial genetic diversity. In terms of biological role, acts as a ribosome collision sensor, splitting the ribosome into its 2 subunits. Detects stalled/collided 70S ribosomes which it binds and splits by an ATP-hydrolysis driven conformational change. Acts upstream of the ribosome quality control system (RQC), a ribosome-associated complex that mediates the extraction of incompletely synthesized nascent chains from stalled ribosomes and their subsequent degradation. Probably generates substrates for RQC. This chain is Endonuclease MutS2, found in Clostridium acetobutylicum (strain ATCC 824 / DSM 792 / JCM 1419 / IAM 19013 / LMG 5710 / NBRC 13948 / NRRL B-527 / VKM B-1787 / 2291 / W).